A 245-amino-acid polypeptide reads, in one-letter code: Probable phosphatase NT01EI_1577 (245 aa).

9 residues coordinate Zn(2+): His-7, His-9, His-15, His-40, Glu-73, His-101, His-131, Asp-192, and His-194.

It belongs to the PHP family. Homotrimer. Requires Zn(2+) as cofactor.

This Edwardsiella ictaluri (strain 93-146) protein is Probable phosphatase NT01EI_1577.